A 275-amino-acid chain; its full sequence is 2-dehydro-3-deoxyphosphooctonate aldolase (275 aa).

This sequence belongs to the KdsA family.

It localises to the cytoplasm. It carries out the reaction D-arabinose 5-phosphate + phosphoenolpyruvate + H2O = 3-deoxy-alpha-D-manno-2-octulosonate-8-phosphate + phosphate. It participates in carbohydrate biosynthesis; 3-deoxy-D-manno-octulosonate biosynthesis; 3-deoxy-D-manno-octulosonate from D-ribulose 5-phosphate: step 2/3. It functions in the pathway bacterial outer membrane biogenesis; lipopolysaccharide biosynthesis. The chain is 2-dehydro-3-deoxyphosphooctonate aldolase from Protochlamydia amoebophila (strain UWE25).